Reading from the N-terminus, the 286-residue chain is 2,3,4,5-tetrahydropyridine-2,6-dicarboxylate N-succinyltransferase (286 aa).

Residues R109 and D146 each coordinate substrate.

It belongs to the transferase hexapeptide repeat family. Homotrimer.

The protein resides in the cytoplasm. The catalysed reaction is (S)-2,3,4,5-tetrahydrodipicolinate + succinyl-CoA + H2O = (S)-2-succinylamino-6-oxoheptanedioate + CoA. Its pathway is amino-acid biosynthesis; L-lysine biosynthesis via DAP pathway; LL-2,6-diaminopimelate from (S)-tetrahydrodipicolinate (succinylase route): step 1/3. This is 2,3,4,5-tetrahydropyridine-2,6-dicarboxylate N-succinyltransferase from Bartonella tribocorum (strain CIP 105476 / IBS 506).